The following is a 58-amino-acid chain: MARRRKYEGLNPFVAAGLIKFSEEGELEKIKLSPKAAIAISLAIIAAILALNLLLPPP.

At 1–33 (MARRRKYEGLNPFVAAGLIKFSEEGELEKIKLS) the chain is on the cytoplasmic side. The helical transmembrane segment at 34 to 55 (PKAAIAISLAIIAAILALNLLL) threads the bilayer. Topologically, residues 56-58 (PPP) are extracellular.

It belongs to the SEC61-beta family. Component of the protein translocase complex. Heterotrimer consisting of alpha (SecY), beta (SecG) and gamma (SecE) subunits. Can form oligomers of the heterotrimer.

It is found in the cell membrane. In terms of biological role, involved in protein export. The function of the beta subunit is unknown, but it may be involved in stabilization of the trimeric complex. The polypeptide is Preprotein translocase subunit SecG (Pyrobaculum calidifontis (strain DSM 21063 / JCM 11548 / VA1)).